Consider the following 102-residue polypeptide: Exocrine gland-secreted peptide 1 (102 aa).

Positions 1-22 (MTSLPVLLFLIILLLPSMITEG) are cleaved as a signal peptide. Cys-63 and Cys-95 are joined by a disulfide.

The protein belongs to the exocrine gland-secreted peptide family. Monomer. Expressed in the extraorbital lacrimal gland from where it is secreted into tears.

It localises to the secreted. Functionally, male-specific phermone which is recognized by the Vmn2r116/V2rp5 receptor in the vomeronasal organ (VNO) and enhances female sexual receptive behavior (lordosis) upon male mounting, resulting in successful copulation. This is Exocrine gland-secreted peptide 1 from Mus musculus (Mouse).